The primary structure comprises 81 residues: uncharacterized protein (81 aa).

This is an uncharacterized protein from Sulfolobus islandicus filamentous virus (isolate Iceland/Hveragerdi) (SIFV).